The sequence spans 405 residues: Ubiquitin-like modifier-activating enzyme 5 (405 aa).

A disordered region spans residues 1-44 (MATVEELQTRVKQLEEELERERTRNRGGTDGGGGRKKIDQMSSE). Residues 7–24 (LQTRVKQLEEELERERTR) show a composition bias toward basic and acidic residues. ATP contacts are provided by Gly-81, Asp-102, Lys-125, Asn-148, and Asn-182. Zn(2+) is bound by residues Cys-224 and Cys-227. Cys-248 functions as the Glycyl thioester intermediate in the catalytic mechanism. Residues Cys-301 and Cys-306 each coordinate Zn(2+). The interval 346-377 (AETTEEELKAASHGHVPELVEGVHVAYVRPMT) is linker. Positions 390–405 (DDQESLEDLMAKMKSI) match the UFC1-binding sequence (UFC) motif.

Belongs to the ubiquitin-activating E1 family. UBA5 subfamily. Homodimer; homodimerization is required for UFM1 activation. Interacts (via UIS motif) with UFM1; binds UFM1 via a trans-binding mechanism in which UFM1 interacts with distinct sites in both subunits of the UBA5 homodimer. Interacts (via C-terminus) with UFC1.

Its subcellular location is the cytoplasm. The protein resides in the nucleus. It is found in the endoplasmic reticulum membrane. It localises to the golgi apparatus. Functionally, E1-like enzyme which specifically catalyzes the first step in ufmylation. Activates UFM1 by first adenylating its C-terminal glycine residue with ATP, and thereafter linking this residue to the side chain of a cysteine residue in E1, yielding a UFM1-E1 thioester and free AMP. Activates UFM1 via a trans-binding mechanism, in which UFM1 interacts with distinct sites in both subunits of the UBA5 homodimer. Trans-binding also promotes stabilization of the UBA5 homodimer, and enhances ATP-binding. Transfer of UFM1 from UBA5 to the E2-like enzyme UFC1 also takes place using a trans mechanism. The polypeptide is Ubiquitin-like modifier-activating enzyme 5 (Branchiostoma floridae (Florida lancelet)).